The primary structure comprises 248 residues: Small ribosomal subunit protein uS3 (248 aa).

The 73-residue stretch at Ile39–Lys111 folds into the KH type-2 domain. The tract at residues Lys222 to Asn248 is disordered.

It belongs to the universal ribosomal protein uS3 family. In terms of assembly, part of the 30S ribosomal subunit. Forms a tight complex with proteins S10 and S14.

Its function is as follows. Binds the lower part of the 30S subunit head. Binds mRNA in the 70S ribosome, positioning it for translation. This chain is Small ribosomal subunit protein uS3, found in Alteracholeplasma palmae (strain ATCC 49389 / J233) (Acholeplasma palmae).